The following is a 395-amino-acid chain: Testis-expressed protein 44 (395 aa).

Disordered regions lie at residues 1 to 32 (MALP…PLTA), 46 to 100 (WQDI…LQVS), 133 to 215 (KMSQ…SDES), and 235 to 258 (FPPP…GRRP). Polar residues predominate over residues 53 to 65 (SFKTATPRAISTS). The span at 87–98 (PLLPSQNPSPLQ) shows a compositional bias: low complexity. The span at 192-207 (SAEEKAEHPKAPHPEA) shows a compositional bias: basic and acidic residues. A Phosphoserine modification is found at S333.

Testis. Detected in germ cells at all stages of the seminiferous epithelium, strong expression in elongating spermatids (at protein level).

It localises to the cytoplasm. This Homo sapiens (Human) protein is Testis-expressed protein 44.